The following is a 172-amino-acid chain: Large ribosomal subunit protein uL10 (172 aa).

The protein belongs to the universal ribosomal protein uL10 family. In terms of assembly, part of the ribosomal stalk of the 50S ribosomal subunit. The N-terminus interacts with L11 and the large rRNA to form the base of the stalk. The C-terminus forms an elongated spine to which L12 dimers bind in a sequential fashion forming a multimeric L10(L12)X complex.

Its function is as follows. Forms part of the ribosomal stalk, playing a central role in the interaction of the ribosome with GTP-bound translation factors. The sequence is that of Large ribosomal subunit protein uL10 from Syntrophotalea carbinolica (strain DSM 2380 / NBRC 103641 / GraBd1) (Pelobacter carbinolicus).